The sequence spans 305 residues: Probable lipid kinase YegS-like (305 aa).

The region spanning 1 to 129 is the DAGKc domain; the sequence is MTQRRAMLIL…VDLGEVGGKL (129 aa). ATP contacts are provided by residues Thr39, 65–71, and Thr92; that span reads GDGTLRD. Leu210, Asp213, and Leu215 together coordinate Mg(2+). Glu268 (proton acceptor) is an active-site residue.

The protein belongs to the diacylglycerol/lipid kinase family. YegS lipid kinase subfamily. Mg(2+) serves as cofactor. The cofactor is Ca(2+).

Its subcellular location is the cytoplasm. Probably phosphorylates lipids; the in vivo substrate is unknown. The polypeptide is Probable lipid kinase YegS-like (Pseudomonas savastanoi pv. phaseolicola (strain 1448A / Race 6) (Pseudomonas syringae pv. phaseolicola (strain 1448A / Race 6))).